The chain runs to 301 residues: Oxaloacetate tautomerase YisK (301 aa).

Lys-99 is a binding site for oxalate. 3 residues coordinate Mn(2+): Glu-148, Glu-150, and Asp-179. Residues Lys-196 and Thr-266 each contribute to the oxalate site.

The protein belongs to the FAH family. Homodimer. It depends on Mg(2+) as a cofactor. Mn(2+) is required as a cofactor.

Its subcellular location is the cytoplasm. The enzyme catalyses oxaloacetate = enol-oxaloacetate. It catalyses the reaction oxaloacetate + H(+) = pyruvate + CO2. Its function is as follows. Tautomerase that converts enol-oxaloacetate to the keto form of oxaloacetate. Also shows weak oxaloacetate decarboxylase (ODx), catalyzing the decarboxylation of oxaloacetate (OAA) to pyruvate and CO(2). In Bacillus subtilis (strain 168), this protein is Oxaloacetate tautomerase YisK.